Here is a 63-residue protein sequence, read N- to C-terminus: Beta-defensin 4 (63 aa).

A signal peptide spans 1–22; that stretch reads MRIHYLLFTFLLVLLSPLAAFT. A Pyrrolidone carboxylic acid modification is found at glutamine 23. Disulfide bonds link cysteine 31-cysteine 59, cysteine 38-cysteine 52, and cysteine 42-cysteine 60.

This sequence belongs to the beta-defensin family. As to expression, tongue, esophagus and trachea.

The protein localises to the secreted. Functionally, exhibits antimicrobial activity against Gram-negative bacteria and Gram-positive bacteria. May act as a ligand for C-C chemokine receptor CCR6. Can bind to mouse (but not human) CCR6 and induce chemotactic activity of CCR6-expressing cells. In Mus musculus (Mouse), this protein is Beta-defensin 4 (Defb4).